The primary structure comprises 291 residues: Pituitary-specific positive transcription factor 1 (291 aa).

The 9aaTAD motif lies at 5-13 (AFTSADTFI). The 75-residue stretch at 124–198 (MDSPEIRELE…ILSKWLEEAE (75 aa)) folds into the POU-specific domain. Positions 214–273 (KRKRRTTISIAAKDALERHFGEQNKPSSQEIMRMAEELNLEKEVVRVWFCNRRQREKRVK) form a DNA-binding region, homeobox.

Belongs to the POU transcription factor family. Class-1 subfamily. In terms of assembly, interacts with PITX1. Interacts with LHX3. Interacts with ELK1.

The protein localises to the nucleus. Its function is as follows. Transcription factor involved in the specification of the lactotrope, somatotrope, and thyrotrope phenotypes in the developing anterior pituitary. Specifically binds to the consensus sequence 5'-TAAAT-3'. Activates growth hormone and prolactin genes. The chain is Pituitary-specific positive transcription factor 1 (POU1F1) from Homo sapiens (Human).